A 1410-amino-acid polypeptide reads, in one-letter code: MADTDLFMECEEEELEPWQKISDVIEDSVVEDYNSVDKTTTVSVSQQPVSAPVPIAAHASVAGHLSTSTTVSSSGAQNSDSTKKTLVTLIANNNAGNPLVQQGGQPLILTQNPAPGLGTMVTQPVLRPVQVMQNANHVTSSPVASQPIFITTQGFPVRNVRPVQNAMNQVGIVLNVQQGQTVRPITLVPAPGTQFVKPTVGVPQVFSQMTPVRPGSTMPVRPTTNTFTTVIPATLTIRSTVPQSQSQQTKSTPSTSTTPTATQPTSLGQLAVQSPGQSNQTTNPKLAPSFPSPPAVSIASFVTVKRPGVTGENSNEVAKLVNTLNTIPSLGQSPGPVVVSNNSSAHGSQRTSGPESSMKVTSSIPVFDLQDGGRKICPRCNAQFRVTEALRGHMCYCCPEMVEYQKKGKSLDSEPSVPSAAKPPSPEKTAPVASTPSSTPIPALSPPTKVPEPNENVGDAVQTKLIMLVDDFYYGRDGGKVAQLTNFPKVATSFRCPHCTKRLKNNIRFMNHMKHHVELDQQNGEVDGHTICQHCYRQFSTPFQLQCHLENVHSPYESTTKCKICEWAFESEPLFLQHMKDTHKPGEMPYVCQVCQYRSSLYSEVDVHFRMIHEDTRHLLCPYCLKVFKNGNAFQQHYMRHQKRNVYHCNKCRLQFLFAKDKIEHKLQHHKTFRKPKQLEGLKPGTKVTIRASRGQPRTVPVSSNDTPPSALQEAAPLTSSMDPLPVFLYPPVQRSIQKRAVRKMSVMGRQTCLECSFEIPDFPNHFPTYVHCSLCRYSTCCSRAYANHMINNHVPRKSPKYLALFKNSVSGIKLACTSCTFVTSVGDAMAKHLVFNPSHRSSSILPRGLTWIAHSRHGQTRDRVHDRNVKNMYPPPSFPTNKAATVKSAGATPAEPEELLTPLAPALPSPASTATPPPTPTHPQALALPPLATEGAECLNVDDQDEGSPVTQEPELASGGGGSGGVGKKEQLSVKKLRVVLFALCCNTEQAAEHFRNPQRRIRRWLRRFQASQGENLEGKYLSFEAEEKLAEWVLTQREQQLPVNEETLFQKATKIGRSLEGGFKISYEWAVRFMLRHHLTPHARRAVAHTLPKDVAENAGLFIDFVQRQIHNQDLPLSMIVAIDEISLFLDTEVLSSDDRKENALQTVGTGEPWCDVVLAILADGTVLPTLVFYRGQMDQPANMPDSILLEAKESGYSDDEIMELWSTRVWQKHTACQRSKGMLVMDCHRTHLSEEVLAMLSASSTLPAVVPAGCSSKIQPLDVCIKRTVKNFLHKKWKEQAREMADTACDSDVLLQLVLVWLGEVLGVIGDCPELVQRSFLVASVLPGPDGNINSPTRNADMQEELIASLEEQLKLSGEHSESSTPRPRSSPEETIEPESLHQLFEGESETESFYGFEEADLDLMEI.

Positions Arg238–Pro291 are disordered. Positions Ser239 to Ser266 are enriched in low complexity. The segment covering Leu267–Pro284 has biased composition (polar residues). Lys319 is covalently cross-linked (Glycyl lysine isopeptide (Lys-Gly) (interchain with G-Cter in SUMO2)). The interval Gln332–Thr361 is disordered. Phosphoserine is present on Ser333. Polar residues predominate over residues Ala345 to Thr361. Lys359 participates in a covalent cross-link: Glycyl lysine isopeptide (Lys-Gly) (interchain with G-Cter in SUMO2). The residue at position 363 (Ser363) is a Phosphoserine. Residues Lys375–Cys397 form a C2H2-type 1; atypical zinc finger. Positions Lys409–Asn456 are disordered. Lys422 is covalently cross-linked (Glycyl lysine isopeptide (Lys-Gly) (interchain with G-Cter in SUMO2)). Ser425 is modified (phosphoserine). Residue Thr439 is modified to Phosphothreonine. The residue at position 445 (Ser445) is a Phosphoserine. Lys449 participates in a covalent cross-link: Glycyl lysine isopeptide (Lys-Gly) (interchain with G-Cter in SUMO2). A Phosphothreonine modification is found at Thr463. Lys489 is covalently cross-linked (Glycyl lysine isopeptide (Lys-Gly) (interchain with G-Cter in SUMO2)). C2H2-type zinc fingers lie at residues Phe494–His516, Thr530–His553, Thr560–His583, Tyr590–His613, Leu619–His641, and Tyr647–His670. Lys629 is covalently cross-linked (Glycyl lysine isopeptide (Lys-Gly) (interchain with G-Cter in SUMO2)). Lys677 participates in a covalent cross-link: Glycyl lysine isopeptide (Lys-Gly) (interchain with G-Cter in SUMO2). The interval Ser693 to Ala715 is disordered. A compositionally biased stretch (polar residues) spans Pro701–Ser710. A C2H2-type 8 zinc finger spans residues Val771–His794. Residue Lys801 forms a Glycyl lysine isopeptide (Lys-Gly) (interchain with G-Cter in SUMO2) linkage. The required for interaction with CBX5 stretch occupies residues Val810–Leu850. The segment at Leu815 to His840 adopts a C2H2-type 9 zinc-finger fold. Ser856 is subject to Phosphoserine. Disordered stretches follow at residues Arg857–Leu927 and Val942–Lys969. Residues Gln860–Val870 are compositionally biased toward basic and acidic residues. Residue Lys883 forms a Glycyl lysine isopeptide (Lys-Gly) (interchain with G-Cter in SUMO2) linkage. A compositionally biased stretch (low complexity) spans Ala892–Ala915. The 71-residue stretch at Gly1015–Ala1085 folds into the HTH CENPB-type domain. A DDE-1 domain is found at Leu1117–Phe1323. The residue at position 1338 (Ser1338) is a Phosphoserine. Positions Thr1340–Ser1360 form a coiled coil. The segment at Ser1360 to Phe1400 is disordered. Ser1364 and Ser1367 each carry phosphoserine. Thr1368 is subject to Phosphothreonine. Ser1373 and Ser1374 each carry phosphoserine. Position 1378 is a phosphothreonine (Thr1378). Residues Glu1380 to Asp1404 carry the Integrase domain-binding motif (IBM) motif. Ser1392 carries the post-translational modification Phosphoserine; by CK2. At Thr1394 the chain carries Phosphothreonine. Residue Ser1396 is modified to Phosphoserine; by CK2.

Interacts with CBX1, CBX3, MAD2L2 and CHAMP1. Interacts with CBX5; POGZ competes with PXVXL motif-containing proteins such as INCENP and TRIM28 for interaction with CBX5. Interacts (via IBM motif) with PSIP1 isoform 1 (via IBD domain); phosphorylation increases its affinity for PSIP1. Interacts with HDGFL2. Post-translationally, phosphorylation increases its interaction with PSIP1.

It is found in the nucleus. The protein resides in the chromosome. It localises to the cytoplasm. In terms of biological role, plays a role in mitotic cell cycle progression and is involved in kinetochore assembly and mitotic sister chromatid cohesion. Probably through its association with CBX5 plays a role in mitotic chromosome segregation by regulating aurora kinase B/AURKB activation and AURKB and CBX5 dissociation from chromosome arms. Promotes the repair of DNA double-strand breaks through the homologous recombination pathway. This Homo sapiens (Human) protein is Pogo transposable element with ZNF domain (POGZ).